The following is a 714-amino-acid chain: ABC transporter B family member 28 (714 aa).

The next 5 membrane-spanning stretches (helical) occupy residues 109-129 (LSVC…MPVF), 161-181 (IFTI…MAIL), 240-260 (ICIL…LMLA), 340-360 (VAVY…VKTG), and 361-381 (ELAV…TFAV). The region spanning 109 to 393 (LSVCLLTLLG…LVNTFGDLRG (285 aa)) is the ABC transmembrane type-1 domain. The 239-residue stretch at 470–708 (VCLDDVHFAY…KGSYASLVGT (239 aa)) folds into the ABC transporter domain. 505–512 (GSSGAGKS) contributes to the ATP binding site.

Belongs to the ABC transporter superfamily. ABCB family. Multidrug resistance exporter (TC 3.A.1.201) subfamily.

It localises to the membrane. The chain is ABC transporter B family member 28 (ABCB28) from Arabidopsis thaliana (Mouse-ear cress).